The sequence spans 148 residues: uncharacterized protein (148 aa).

This is an uncharacterized protein from Bos taurus (Bovine).